The sequence spans 1120 residues: MTMFQYYKRSRHFVFSAFIAFVFVLLCQNTAFARASSNGDLPTKADLQAQLDSLNKQKDLSAQDKLVQQDLTDTLATLDKIDRIKEETVQLRQKVAEAPEKMRQATAALTALSDVDNDEETRKILSTLSLRQLETRVAQALDDLQNAQNDLASYNSQLVSLQTQPERVQNAMYNASQQLQQIRSRLDGTDVGETALRPSQKVLMQAQQALLNAEIDQQRKSLEGNTVLQDTLQKQRDYVTANSARLEHQLQLLQEAVNSKRLTLTEKTAQEAVSPDEAARIQANPLVKQELEINQQLSQRLITATENGNQLMQQNIKVKNWLERALQSERNIKEQIAVLKGSLLLSRILYQQQQTLPSADELENMTNRIADLRLEQFEVNQQRDALFQSDAFVNKLEEGHTNEVNSEVHDALLQVVDMRRELLDQLNKQLGNQLMMAINLQINQQQLMSVSKNLKSILTQQIFWVNSNRPMDWDWIKAFPQSLKDEFKSMKITVNWQKAWPAVFIAFLAGLPLLLIAGLIHWRLGWLKAYQQKLASAVGSLRNDSQLNTPKAILIDLIRALPVCLIILAVGLILLTMQLNISELLWSFSKKLAIFWLVFGLCWKVLEKNGVAVRHFGMPEQQTSHWRRQIVRISLALLPIHFWSVVAELSPLHLMDDVLGQAMIFFNLLLIAFLVWPMCRESWRDKESHTMRLVTITVLSIIPIALMVLTATGYFYTTLRLAGRWIETVYLVIIWNLLYQTVLRGLSVAARRIAWRRALARRQNLVKEGAEGAEPPEEPTIALEQVNQQTLRITMLLMFALFGVMFWAIWSDLITVFSYLDSITLWHYNGTEAGAAVVKNVTMGSLLFAIIASMVAWALIRNLPGLLEVLVLSRLNMRQGASYAITTILNYIIIAVGAMTVFGSLGVSWDKLQWLAAALSVGLGFGLQEIFGNFVSGLIILFERPVRIGDTVTIGSFSGTVSKIRIRATTITDFDRKEVIIPNKAFVTERLINWSLTDTTTRLVIRLGVAYGSDLEKVRKVLLKAATEHPRVMHEPMPEVFFTAFGASTLDHELRLYVRELRDRSRTVDELNRTIDQLCRENDINIAFNQLEVHLHNEKGDEVTEVKRDYKGDDPTPAVG.

A signal peptide spans 1–33; that stretch reads MTMFQYYKRSRHFVFSAFIAFVFVLLCQNTAFA. The Periplasmic portion of the chain corresponds to 34–499; sequence RASSNGDLPT…MKITVNWQKA (466 aa). Coiled coils occupy residues 43 to 98, 126 to 266, and 360 to 422; these read TKAD…VAEA, STLS…TLTE, and DELE…RREL. The helical transmembrane segment at 500–520 threads the bilayer; it reads WPAVFIAFLAGLPLLLIAGLI. At 521–560 the chain is on the cytoplasmic side; the sequence is HWRLGWLKAYQQKLASAVGSLRNDSQLNTPKAILIDLIRA. Residues 561-581 traverse the membrane as a helical segment; that stretch reads LPVCLIILAVGLILLTMQLNI. A topological domain (periplasmic) is located at residue serine 582. Residues 583-603 form a helical membrane-spanning segment; that stretch reads ELLWSFSKKLAIFWLVFGLCW. The Cytoplasmic portion of the chain corresponds to 604 to 634; it reads KVLEKNGVAVRHFGMPEQQTSHWRRQIVRIS. Residues 635-655 traverse the membrane as a helical segment; it reads LALLPIHFWSVVAELSPLHLM. Residues 656-657 are Periplasmic-facing; it reads DD. The helical transmembrane segment at 658–678 threads the bilayer; the sequence is VLGQAMIFFNLLLIAFLVWPM. Residues 679–692 lie on the Cytoplasmic side of the membrane; that stretch reads CRESWRDKESHTMR. The chain crosses the membrane as a helical span at residues 693–713; it reads LVTITVLSIIPIALMVLTATG. The Periplasmic portion of the chain corresponds to 714-728; that stretch reads YFYTTLRLAGRWIET. A helical transmembrane segment spans residues 729-749; sequence VYLVIIWNLLYQTVLRGLSVA. The Cytoplasmic segment spans residues 750-796; the sequence is ARRIAWRRALARRQNLVKEGAEGAEPPEEPTIALEQVNQQTLRITML. A helical transmembrane segment spans residues 797–817; it reads LMFALFGVMFWAIWSDLITVF. Over 818–839 the chain is Periplasmic; it reads SYLDSITLWHYNGTEAGAAVVK. Residues 840–860 form a helical membrane-spanning segment; that stretch reads NVTMGSLLFAIIASMVAWALI. The Cytoplasmic portion of the chain corresponds to 861–886; it reads RNLPGLLEVLVLSRLNMRQGASYAIT. Residues 887–907 form a helical membrane-spanning segment; the sequence is TILNYIIIAVGAMTVFGSLGV. The Periplasmic portion of the chain corresponds to 908–921; it reads SWDKLQWLAAALSV. The helical transmembrane segment at 922–942 threads the bilayer; that stretch reads GLGFGLQEIFGNFVSGLIILF. Residues 943–1120 lie on the Cytoplasmic side of the membrane; sequence ERPVRIGDTV…KGDDPTPAVG (178 aa). Residues 1057–1081 are a coiled coil; sequence YVRELRDRSRTVDELNRTIDQLCRE.

This sequence belongs to the MscS (TC 1.A.23) family.

The protein localises to the cell inner membrane. In terms of biological role, mechanosensitive channel that opens in response to membrane tension and specific ionic conditions. Requires high concentrations of external K(+), NH(4)(+), Rb(+) or Cs(+) to gate. May participate in the regulation of osmotic pressure changes within the cell, although it does not appear to have a major role in osmolarity regulation. Forms an ion channel of 1.0 nanosiemens conductance. The channel can remain active for between 30 seconds and over 3 minutes; it does not desensitize upon extended pressure. Its activity is masked in wild-type cells by the MscS channel. The sequence is that of Mechanosensitive channel MscK (mscK) from Escherichia coli (strain K12).